Reading from the N-terminus, the 168-residue chain is ATP synthase subunit b, sodium ion specific (168 aa).

The helical transmembrane segment at 9 to 29 (VSIDINMFWQIINFLILMFFF) threads the bilayer.

Belongs to the ATPase B chain family. F-type ATPases have 2 components, F(1) - the catalytic core - and F(0) - the membrane proton channel. F(1) has five subunits: alpha(3), beta(3), gamma(1), delta(1), epsilon(1). F(0) has three main subunits: a(1), b(2) and c(10-14). The alpha and beta chains form an alternating ring which encloses part of the gamma chain. F(1) is attached to F(0) by a central stalk formed by the gamma and epsilon chains, while a peripheral stalk is formed by the delta and b chains.

The protein localises to the cell inner membrane. Functionally, f(1)F(0) ATP synthase produces ATP from ADP in the presence of a proton or sodium gradient. F-type ATPases consist of two structural domains, F(1) containing the extramembraneous catalytic core and F(0) containing the membrane proton channel, linked together by a central stalk and a peripheral stalk. During catalysis, ATP synthesis in the catalytic domain of F(1) is coupled via a rotary mechanism of the central stalk subunits to proton translocation. In terms of biological role, component of the F(0) channel, it forms part of the peripheral stalk, linking F(1) to F(0). This is ATP synthase subunit b, sodium ion specific (atpF) from Propionigenium modestum.